The primary structure comprises 175 residues: Adenine phosphoribosyltransferase (175 aa).

This sequence belongs to the purine/pyrimidine phosphoribosyltransferase family. As to quaternary structure, homodimer.

The protein localises to the cytoplasm. The catalysed reaction is AMP + diphosphate = 5-phospho-alpha-D-ribose 1-diphosphate + adenine. Its pathway is purine metabolism; AMP biosynthesis via salvage pathway; AMP from adenine: step 1/1. Its function is as follows. Catalyzes a salvage reaction resulting in the formation of AMP, that is energically less costly than de novo synthesis. This is Adenine phosphoribosyltransferase from Lactobacillus gasseri (strain ATCC 33323 / DSM 20243 / BCRC 14619 / CIP 102991 / JCM 1131 / KCTC 3163 / NCIMB 11718 / NCTC 13722 / AM63).